Here is a 61-residue protein sequence, read N- to C-terminus: Sperm protamine P1 (61 aa).

Residues methionine 1–arginine 61 form a disordered region.

It belongs to the protamine P1 family. As to expression, testis.

It is found in the nucleus. The protein localises to the chromosome. Functionally, protamines substitute for histones in the chromatin of sperm during the haploid phase of spermatogenesis. They compact sperm DNA into a highly condensed, stable and inactive complex. The polypeptide is Sperm protamine P1 (PRM1) (Dasyurus hallucatus (Northern quoll)).